The chain runs to 327 residues: Microtubule-associated protein RP/EB family member 2 (327 aa).

Residues 1–21 (MPGPTQTLSPNGENNNDIIQD) are disordered. Position 2 is an N-acetylalanine (Pro2). Phosphoserine is present on Ser9. A Calponin-homology (CH) domain is found at 57-159 (TMSRHDIIAW…FIQWFKKFYD (103 aa)). Position 167 is a phosphotyrosine (Tyr167). Disordered regions lie at residues 171 to 240 (EARQ…DKDL) and 299 to 327 (ASEE…QEEY). A DCTN1-binding region spans residues 187-327 (QIFNLPKKSH…EQQPPQQEEY (141 aa)). The span at 200–234 (SPTAGAAKSSPAAKPGSTPSRPSSAKRASSSGSAS) shows a compositional bias: low complexity. Ser219 and Ser236 each carry phosphoserine. An EB1 C-terminal domain is found at 236–306 (SDKDLETQVI…LYASEEHEGH (71 aa)). Residues 259-302 (EGVEKERDFYFGKLREIELLCQEHGQENDDLVQRLMDILYASEE) form an APC-binding region. Residues 300 to 317 (SEEHEGHTEEPEAEEQAH) are compositionally biased toward basic and acidic residues. A compositionally biased stretch (low complexity) spans 318–327 (EQQPPQQEEY).

This sequence belongs to the MAPRE family. As to quaternary structure, interacts with DCTN1. Interacts with APC (via C-terminal). Interacts with monomeric and polymerized tubulin. Interacts with SLAIN1. Interacts (via the N-terminal region) with BAG1. Interacts with ASB14. Interacts with HAX1; this interaction is essential for epidermal cell migration. Post-translationally, phosphorylated at Ser-236 by CK2 leading to enhanced cell adhesion. Phosphorylated by CDK1 and AURKB during mitosis reduces the binding affinity of MAPRE2 for microtubules. In terms of processing, ubiquitinated in an ASB14-dependent manner; leading to proteasomal degradation. As to expression, expressed in different tumor cell lines. Up-regulated in activated B- and T-lymphocytes.

It is found in the cytoplasm. It localises to the cytoskeleton. In terms of biological role, adapter protein that is involved in microtubule polymerization, and spindle function by stabilizing microtubules and anchoring them at centrosomes. Therefore, ensures mitotic progression and genome stability. Acts as a central regulator of microtubule reorganization in apico-basal epithelial differentiation. Plays a role during oocyte meiosis by regulating microtubule dynamics. Participates in neurite growth by interacting with plexin B3/PLXNB3 and microtubule reorganization during apico-basal epithelial differentiation. Also plays an essential role for cell migration and focal adhesion dynamics. Mechanistically, recruits HAX1 to microtubules in order to regulate focal adhesion dynamics. The chain is Microtubule-associated protein RP/EB family member 2 (MAPRE2) from Homo sapiens (Human).